The primary structure comprises 362 residues: Caveolae-associated protein 4 (362 aa).

Positions 1 to 24 (MEHNGSASNAGKIHQNRLSSVTED) are disordered. Residues 100 to 120 (IKDVKARVEKQQVRVTKVETK) adopt a coiled-coil conformation. 3 positions are modified to phosphoserine: Ser-152, Ser-171, and Ser-172. Basic and acidic residues predominate over residues 227–255 (PERRERLRQSGERLRQSGERLRQSGERFK). The segment at 227–261 (PERRERLRQSGERLRQSGERLRQSGERFKKSISNA) is disordered. Tyr-324 bears the Phosphotyrosine mark. Thr-334 carries the phosphothreonine modification. Position 353 is a phosphoserine (Ser-353).

The protein belongs to the CAVIN family. As to quaternary structure, component of the CAVIN complex composed of CAVIN1, CAVIN2, CAVIN3 and CAVIN4. Interacts with CAVIN1, CAV3, ADRA1A and ADRA1B. Interacts with CAVIN2; this augments the transactivation of NPPA. Interacts with MAPK1 and MAPK3. As to expression, expressed at much higher levels in cardiomyocytes than in non-cardiomyocytes.

It is found in the cytoplasm. Its subcellular location is the myofibril. It localises to the sarcomere. The protein resides in the cytosol. The protein localises to the cell membrane. It is found in the sarcolemma. Its subcellular location is the membrane. It localises to the caveola. Its function is as follows. Modulates the morphology of formed caveolae in cardiomyocytes, but is not required for caveolar formation. Facilitates the recruitment of MAPK1/3 to caveolae within cardiomyocytes and regulates alpha-1 adrenergic receptor-induced hypertrophic responses in cardiomyocytes through MAPK1/3 activation. Contributes to proper membrane localization and stabilization of caveolin-3 (CAV3) in cardiomyocytes. Induces RHOA activation and activates NPPA transcription and myofibrillar organization through the Rho/ROCK signaling pathway. In Rattus norvegicus (Rat), this protein is Caveolae-associated protein 4.